A 448-amino-acid chain; its full sequence is DNA repair protein RadA (448 aa).

The C4-type zinc-finger motif lies at 10-27 (CQHCGFTSPKWLGKCVQC). 96-103 (GSPGVGKS) is an ATP binding site. Residues 253-257 (KNRFG) carry the RadA KNRFG motif motif. The tract at residues 351 to 448 (DVFINVSGGI…NVVGKIVEWM (98 aa)) is lon-protease-like.

The protein belongs to the RecA family. RadA subfamily.

Functionally, DNA-dependent ATPase involved in processing of recombination intermediates, plays a role in repairing DNA breaks. Stimulates the branch migration of RecA-mediated strand transfer reactions, allowing the 3' invading strand to extend heteroduplex DNA faster. Binds ssDNA in the presence of ADP but not other nucleotides, has ATPase activity that is stimulated by ssDNA and various branched DNA structures, but inhibited by SSB. Does not have RecA's homology-searching function. The protein is DNA repair protein RadA of Helicobacter pylori (strain J99 / ATCC 700824) (Campylobacter pylori J99).